A 152-amino-acid chain; its full sequence is Transcriptional regulator MraZ (152 aa).

SpoVT-AbrB domains lie at 5–52 (ASAI…PIHE) and 81–124 (AHEV…DEQA).

It belongs to the MraZ family. In terms of assembly, forms oligomers.

It is found in the cytoplasm. Its subcellular location is the nucleoid. The chain is Transcriptional regulator MraZ from Shewanella oneidensis (strain ATCC 700550 / JCM 31522 / CIP 106686 / LMG 19005 / NCIMB 14063 / MR-1).